Reading from the N-terminus, the 737-residue chain is Propionyl-CoA carboxylase alpha chain, mitochondrial (737 aa).

Residues 1-61 (MAGLWVRTVA…QCLVVSRSLS (61 aa)) constitute a mitochondrion transit peptide. Positions 71–518 (TFDKILIANR…STKFLSDVYP (448 aa)) constitute a Biotin carboxylation domain. K74 is subject to N6-acetyllysine; alternate. Residue K74 is modified to N6-succinyllysine; alternate. N6-succinyllysine is present on K128. N6-acetyllysine; alternate is present on K159. K159 is subject to N6-succinyllysine; alternate. The residue at position 163 (K163) is an N6-acetyllysine. K186 lines the ATP pocket. Residues 190–387 (KLLAKRAKVN…LVQEMILVAK (198 aa)) form the ATP-grasp domain. K197 carries the N6-succinyllysine modification. K209 is subject to N6-acetyllysine; alternate. An N6-succinyllysine; alternate modification is found at K209. ATP is bound by residues 218 to 279 (AREI…PRHI), E270, and N305. At S261 the chain carries Phosphoserine. Position 271 is an N6-succinyllysine (K271). K337 carries the N6-acetyllysine; alternate modification. Position 337 is an N6-succinyllysine; alternate (K337). Mg(2+) is bound by residues E345, E358, and N360. Residues E345, E358, and N360 each coordinate Mn(2+). R362 is a catalytic residue. An N6-succinyllysine mark is found at K394 and K416. Biotin is bound at residue F418. Position 505 is an N6-acetyllysine (K505). N6-succinyllysine is present on residues K511, K522, K567, and K657. The 80-residue stretch at 658 to 737 (FMLEKVPKDT…GEGDLLVELE (80 aa)) folds into the Biotinyl-binding domain. K703 carries the N6-biotinyllysine; by HLCS modification.

As to quaternary structure, the holoenzyme is a dodecamer composed of 6 PCCA/alpha subunits and 6 PCCB/beta subunits. Interacts (via the biotin carboxylation domain) with SIRT4. Interacts with SIRT3 and SIRT5. It depends on biotin as a cofactor. Mg(2+) serves as cofactor. Requires Mn(2+) as cofactor. Acetylated. Post-translationally, the biotin cofactor is covalently attached to the C-terminal biotinyl-binding domain and is required for the catalytic activity. Biotinylation is catalyzed by HLCS.

The protein localises to the mitochondrion matrix. It carries out the reaction propanoyl-CoA + hydrogencarbonate + ATP = (S)-methylmalonyl-CoA + ADP + phosphate + H(+). It catalyses the reaction butanoyl-CoA + hydrogencarbonate + ATP = (2S)-ethylmalonyl-CoA + ADP + phosphate + H(+). It participates in metabolic intermediate metabolism; propanoyl-CoA degradation; succinyl-CoA from propanoyl-CoA: step 1/3. Its function is as follows. This is one of the 2 subunits of the biotin-dependent propionyl-CoA carboxylase (PCC), a mitochondrial enzyme involved in the catabolism of odd chain fatty acids, branched-chain amino acids isoleucine, threonine, methionine, and valine and other metabolites. Propionyl-CoA carboxylase catalyzes the carboxylation of propionyl-CoA/propanoyl-CoA to D-methylmalonyl-CoA/(S)-methylmalonyl-CoA. Within the holoenzyme, the alpha subunit catalyzes the ATP-dependent carboxylation of the biotin carried by the biotin carboxyl carrier (BCC) domain, while the beta subunit then transfers the carboxyl group from carboxylated biotin to propionyl-CoA. Propionyl-CoA carboxylase also significantly acts on butyryl-CoA/butanoyl-CoA, which is converted to ethylmalonyl-CoA/(2S)-ethylmalonyl-CoA. Other alternative minor substrates include (2E)-butenoyl-CoA/crotonoyl-CoA. The protein is Propionyl-CoA carboxylase alpha chain, mitochondrial of Rattus norvegicus (Rat).